A 300-amino-acid polypeptide reads, in one-letter code: Actin-related protein 2/3 complex subunit 2-A (300 aa).

It belongs to the ARPC2 family. Component of the Arp2/3 complex composed of actr2/arp2, actr3/arp3, arpc1 (arpc1a or arpc1b), arpc2, arpc3, arpc4 and arpc5.

It localises to the cytoplasm. It is found in the cytoskeleton. The protein resides in the cell projection. The protein localises to the nucleus. In terms of biological role, actin-binding component of the Arp2/3 complex, a multiprotein complex that mediates actin polymerization upon stimulation by nucleation-promoting factor (NPF). The Arp2/3 complex mediates the formation of branched actin networks in the cytoplasm, providing the force for cell motility. In addition to its role in the cytoplasmic cytoskeleton, the Arp2/3 complex also promotes actin polymerization in the nucleus, thereby regulating gene transcription and repair of damaged DNA. The Arp2/3 complex promotes homologous recombination (HR) repair in response to DNA damage by promoting nuclear actin polymerization, leading to drive motility of double-strand breaks (DSBs). This Xenopus laevis (African clawed frog) protein is Actin-related protein 2/3 complex subunit 2-A (arpc2-a).